A 491-amino-acid polypeptide reads, in one-letter code: MTDLTSFSAAELAGLVARGESSAVEVTQAHLDRISAVDDRVHAFLHVDTEGALDAARDVDSRRAAGEPLGPLAGVPVAVKDVLTTKGVPTTAGSKILADWRPPYDSTIVRRLRAAGTVMLGKTNMDEFAMGSSTEYSAFGPTHNPWDLSRIPGGSGGGSSAALAAYETPLSIGSDTGGSIRQPGAVTGTVGVKPTYGGTSRYGLVAFSSSLDTPGPCARTVLDAALLHEVIGGHDPLDSTSIPAPVPDVVAAARLGASGDLTGVRLGVVREFAGEGAEPGVLAAFHAAVETLTKLGAEVVEVSCPHFQYALPAYYLIAPSECSSNLARFDGVRFGLRVGDDGIRSLEEVMSATREAGFGPEVKRRVMLGTYALSSGYYDAYYGQAQKVRTLISRDFTTAFEQVDALISPTTPFVAFPVGARTADPYQMYLADLFTIPSNLYGGPGISVPCGLADGLPVGLQVMAPTMADDRMYRVAAALESVVGPFTPPAL.

Active-site charge relay system residues include Lys-80 and Ser-155. The Acyl-ester intermediate role is filled by Ser-179.

The protein belongs to the amidase family. GatA subfamily. As to quaternary structure, heterotrimer of A, B and C subunits.

It catalyses the reaction L-glutamyl-tRNA(Gln) + L-glutamine + ATP + H2O = L-glutaminyl-tRNA(Gln) + L-glutamate + ADP + phosphate + H(+). In terms of biological role, allows the formation of correctly charged Gln-tRNA(Gln) through the transamidation of misacylated Glu-tRNA(Gln) in organisms which lack glutaminyl-tRNA synthetase. The reaction takes place in the presence of glutamine and ATP through an activated gamma-phospho-Glu-tRNA(Gln). In Salinispora tropica (strain ATCC BAA-916 / DSM 44818 / JCM 13857 / NBRC 105044 / CNB-440), this protein is Glutamyl-tRNA(Gln) amidotransferase subunit A.